A 501-amino-acid chain; its full sequence is Splicing factor 3A subunit 3 (501 aa).

N-acetylmethionine is present on methionine 1. Residues serine 54 and serine 121 each carry the phosphoserine modification. Residues 175 to 179 carry the Nuclear localization signal motif; that stretch reads KERKN. A phosphoserine mark is found at serine 295 and serine 299. A compositionally biased stretch (basic and acidic residues) spans 343–354; that stretch reads ENVQRKQARTGE. Positions 343–374 are disordered; that stretch reads ENVQRKQARTGEEREEEEEEQISESESEDEEN. Positions 355–374 are enriched in acidic residues; the sequence is EREEEEEEQISESESEDEEN. Phosphoserine is present on residues serine 365, serine 367, and serine 369. The Matrin-type zinc-finger motif lies at 406 to 437; it reads YNCEICGNYTYRGPKAFQRHFAEWRHAHGMRC. The residue at position 475 (threonine 475) is a Phosphothreonine.

Belongs to the SF3A3 family. Component of the 17S U2 SnRNP complex, a ribonucleoprotein complex that contains small nuclear RNA (snRNA) U2 and a number of specific proteins. Part of the SF3A subcomplex of the 17S U2 SnRNP complex which is composed of three subunits; SF3A3/SAP61, SF3A2/SAP62 and SF3A1/SAP114. SF3A associates with the splicing factor SF3B and a 12S RNA unit to form the mature 17S U2 small nuclear ribonucleoprotein complex (17S U2 snRNP). Identified in the spliceosome 'E' complex, a precursor of the spliceosome 'A' complex. Identified in the spliceosome 'A' and 'B' complexes. Identified in the spliceosome 'C' complex. As to expression, ubiquitous.

The protein resides in the nucleus speckle. It localises to the nucleus. In terms of biological role, component of the 17S U2 SnRNP complex of the spliceosome, a large ribonucleoprotein complex that removes introns from transcribed pre-mRNAs. The 17S U2 SnRNP complex (1) directly participates in early spliceosome assembly and (2) mediates recognition of the intron branch site during pre-mRNA splicing by promoting the selection of the pre-mRNA branch-site adenosine, the nucleophile for the first step of splicing. Within the 17S U2 SnRNP complex, SF3A3 is part of the SF3A subcomplex that contributes to the assembly of the 17S U2 snRNP, and the subsequent assembly of the pre-spliceosome 'E' complex and the pre-catalytic spliceosome 'A' complex. Involved in pre-mRNA splicing as a component of pre-catalytic spliceosome 'B' complexes. This chain is Splicing factor 3A subunit 3 (SF3A3), found in Homo sapiens (Human).